The sequence spans 693 residues: Putative tyrosinase-like protein tyr-3 (693 aa).

Residues 1 to 18 (MIRYIILLVYFLIFEVNS) form the signal peptide. Cu cation is bound by residues His-142, His-152, His-161, His-281, His-285, and His-308. ShKT domains follow at residues 472 to 506 (CFNENECCGPWSAKGECQKNPVYMNVWCKASCRQC), 516 to 550 (CSDRHTNCAMWSRSGECNKNPLWMSENCRSSCQKC), 591 to 625 (CYNEDQCCPIWAQRGQCRSNPGYMTCQCKVSCGVC), and 634 to 667 (CADYHYDCAAWARRGECLKNKWMPENCRRSCNTC). Disulfide bonds link Cys-472-Cys-506, Cys-479-Cys-499, Cys-488-Cys-503, Cys-516-Cys-550, Cys-523-Cys-543, Cys-532-Cys-547, Cys-591-Cys-625, Cys-598-Cys-618, Cys-607-Cys-622, Cys-634-Cys-667, Cys-641-Cys-660, and Cys-650-Cys-664.

Belongs to the tyrosinase family. Cu(2+) is required as a cofactor.

The sequence is that of Putative tyrosinase-like protein tyr-3 (tyr-3) from Caenorhabditis elegans.